The following is a 174-amino-acid chain: von Hippel-Lindau tumor suppressor homolog (174 aa).

The protein belongs to the VHL family. As to quaternary structure, interacts with hif-1 (hydroxylated on 'Pro-621'); the interaction induces hif-1 degradation. May be a component of the cullin E3 ubiquitin ligase complex.

The protein operates within protein modification; protein ubiquitination. In terms of biological role, involved in the response to variation in environmental oxygen levels by targeting the hypoxia-inducible transcription factor hif-1 for proteasomal degradation when oxygen levels are normal (around 20%). By regulating hif-1 expression, plays a role in iron homeostasis, aging, heat acclimation and progeny size. Mediates resistance to enteropathogenic E.coli. Mediates susceptibility to B.thuringiensis pore-forming toxins. Not involved in P.aeruginosa susceptibility. In Caenorhabditis elegans, this protein is von Hippel-Lindau tumor suppressor homolog.